Consider the following 645-residue polypeptide: Chaperone protein DnaK (645 aa).

Phosphothreonine; by autocatalysis is present on Thr201. Over residues 606–629 (NTNNATAGDNNTTDTGSSSNSDGS) the composition is skewed to low complexity. Positions 606–645 (NTNNATAGDNNTTDTGSSSNSDGSKVVDSDYQEIDKKDGK) are disordered. Residues 630–645 (KVVDSDYQEIDKKDGK) show a composition bias toward basic and acidic residues.

The protein belongs to the heat shock protein 70 family.

Acts as a chaperone. This Ehrlichia ruminantium (strain Welgevonden) protein is Chaperone protein DnaK.